The sequence spans 296 residues: Glycine--tRNA ligase alpha subunit (296 aa).

This sequence belongs to the class-II aminoacyl-tRNA synthetase family. In terms of assembly, tetramer of two alpha and two beta subunits.

It localises to the cytoplasm. It carries out the reaction tRNA(Gly) + glycine + ATP = glycyl-tRNA(Gly) + AMP + diphosphate. The polypeptide is Glycine--tRNA ligase alpha subunit (Francisella tularensis subsp. novicida (strain U112)).